The chain runs to 196 residues: Large ribosomal subunit protein uL18 (196 aa).

It belongs to the universal ribosomal protein uL18 family. As to quaternary structure, part of the 50S ribosomal subunit. Contacts the 5S and 23S rRNAs.

In terms of biological role, this is one of the proteins that bind and probably mediate the attachment of the 5S RNA into the large ribosomal subunit, where it forms part of the central protuberance. The sequence is that of Large ribosomal subunit protein uL18 from Thermofilum pendens (strain DSM 2475 / Hrk 5).